The primary structure comprises 184 residues: Mitochondrial import inner membrane translocase subunit Tim22 (184 aa).

Cystine bridges form between cysteine 59–cysteine 131 and cysteine 150–cysteine 169. The next 3 helical transmembrane spans lie at 64–84, 115–133, and 160–180; these read ALACVGGFVLGGAFGVFTAGI, YAKNFAIVGAMFSCTECLV, and AGLKAGVLGCGGFAAFSAVID.

It belongs to the Tim17/Tim22/Tim23 family. In terms of assembly, core component of the TIM22 complex.

It is found in the mitochondrion inner membrane. Essential core component of the TIM22 complex, a complex that mediates the import and insertion of multi-pass transmembrane proteins into the mitochondrial inner membrane. In the TIM22 complex, it constitutes the voltage-activated and signal-gated channel. Forms a twin-pore translocase that uses the membrane potential as external driving force in 2 voltage-dependent steps. The polypeptide is Mitochondrial import inner membrane translocase subunit Tim22 (timm22) (Xenopus laevis (African clawed frog)).